Consider the following 214-residue polypeptide: Germin-like protein 9-3 (214 aa).

The signal sequence occupies residues methionine 1–alanine 23. Residues asparagine 42, asparagine 60, and asparagine 69 are each glycosylated (N-linked (GlcNAc...) asparagine). One can recognise a Cupin type-1 domain in the interval methionine 59 to glutamine 202. Mn(2+)-binding residues include histidine 104, histidine 106, glutamate 111, and histidine 150.

Belongs to the germin family. As to quaternary structure, oligomer (believed to be a pentamer but probably hexamer).

Its subcellular location is the secreted. The protein localises to the extracellular space. It localises to the apoplast. Functionally, may play a role in plant defense. Probably has no oxalate oxidase activity even if the active site is conserved. This Oryza sativa subsp. japonica (Rice) protein is Germin-like protein 9-3.